A 117-amino-acid polypeptide reads, in one-letter code: Large ribosomal subunit protein bL19 (117 aa).

Belongs to the bacterial ribosomal protein bL19 family.

Its function is as follows. This protein is located at the 30S-50S ribosomal subunit interface and may play a role in the structure and function of the aminoacyl-tRNA binding site. This is Large ribosomal subunit protein bL19 from Vibrio cholerae serotype O1 (strain ATCC 39541 / Classical Ogawa 395 / O395).